The primary structure comprises 57 residues: Dendroaspis polylepis MT9 (57 aa).

4 disulfides stabilise this stretch: C3–C22, C17–C36, C38–C49, and C50–C55.

This sequence belongs to the three-finger toxin family. Short-chain subfamily. As to expression, expressed by the venom gland.

It localises to the secreted. Functionally, when tested on muscarinic GPCR, specifically antagonizes the type 2 receptor (CHRM2) subtype (Ki/Kd=120-399 nM). Ex vivo, it reverses the M2R-agonist-induced relaxation in rat and human arteries. The protein is Dendroaspis polylepis MT9 of Dendroaspis polylepis polylepis (Black mamba).